The following is a 394-amino-acid chain: Muscle cell intermediate filament protein AV71 (394 aa).

The tract at residues 1–73 (AEINLVRRRV…RVHDQEITEL (73 aa)) is coil 1B. Residues 1 to 239 (AEINLVRRRV…KMLEGEENRA (239 aa)) form the IF rod domain. The tract at residues 74–91 (QAMAARDTTPENREYFKN) is linker 12. The tract at residues 92–239 (ELSSAIRDIR…KMLEGEENRA (148 aa)) is coil 2. Residues 240-394 (GLRQLVEQVV…HIQRSSHTIN (155 aa)) form a tail region. Residues 272-389 (SRTSFQRSAK…EERASHIQRS (118 aa)) enclose the LTD domain.

This sequence belongs to the intermediate filament family.

The polypeptide is Muscle cell intermediate filament protein AV71 (AV71) (Acanthocheilonema viteae (Filarial nematode worm)).